The sequence spans 790 residues: Disintegrin and metalloproteinase domain-containing protein 30 (790 aa).

A signal peptide spans 1 to 27; the sequence is MRSVQIFLSQCRLLLLLVPTMLLKSLG. A propeptide spanning residues 28–198 is cleaved from the precursor; the sequence is EDVIFHPEGE…KARLRDFPGS (171 aa). Residues 170-177 carry the Cysteine switch motif; sequence QVCGLSDD. C172 provides a ligand contact to Zn(2+). The Extracellular segment spans residues 199–687; it reads YKHPKYLELI…LRGAIPSSIW (489 aa). A Peptidase M12B domain is found at 203–393; that stretch reads KYLELILLFD…SGATCLNNIP (191 aa). Residue N222 is glycosylated (N-linked (GlcNAc...) asparagine). 3 disulfides stabilise this stretch: C313–C388, C353–C373, and C355–C361. Position 338 (H338) interacts with Zn(2+). The active site involves E339. Residues H342 and H348 each contribute to the Zn(2+) site. N372, N438, N473, and N625 each carry an N-linked (GlcNAc...) asparagine glycan. Positions 399–485 constitute a Disintegrin domain; it reads LKRCGNKIVE…SCPNDVYKQD (87 aa). Residues C457 and C477 are joined by a disulfide bond. One can recognise an EGF-like domain in the interval 629–663; sequence LQFDCLPEKCNTRGVCNNRKNCHCMYGWAPPFCEE. 3 disulfides stabilise this stretch: C633–C644, C638–C650, and C652–C661. A helical membrane pass occupies residues 688–708; it reads VVSIIMFRLILLILSVVFVFF. At 709 to 790 the chain is on the cytoplasmic side; that stretch reads RQVIGNHLKP…KAKSVKKQKK (82 aa). The segment covering 720–779 has biased composition (basic and acidic residues); the sequence is QEKMPLSKAKTEQEESKTKTVQEESKTKTGQEESEAKTGQEESKAKTGQEESKANIESKR. Residues 720 to 790 form a disordered region; the sequence is QEKMPLSKAK…KAKSVKKQKK (71 aa). 5 consecutive repeat copies span residues 732 to 740, 741 to 749, 750 to 758, 759 to 767, and 768 to 776. The interval 732-776 is 5 X 9 AA approximate repeats; that stretch reads QEESKTKTVQEESKTKTGQEESEAKTGQEESKAKTGQEESKANIE. The segment covering 780–790 has biased composition (basic residues); sequence PKAKSVKKQKK.

In terms of assembly, interacts with CTSD; this leads to activation of CTSD. Zn(2+) serves as cofactor. In terms of tissue distribution, expressed in brain neurons (at protein level). Expressed in testis.

The protein localises to the late endosome membrane. Functionally, plays a role in lysosomal amyloid precursor protein (APP) processing by cleaving and activating CTSD/cathepsin D which leads to APP degradation. In Homo sapiens (Human), this protein is Disintegrin and metalloproteinase domain-containing protein 30 (ADAM30).